The sequence spans 259 residues: Pyrroloquinoline-quinone synthase (259 aa).

This sequence belongs to the PqqC family.

The enzyme catalyses 6-(2-amino-2-carboxyethyl)-7,8-dioxo-1,2,3,4,7,8-hexahydroquinoline-2,4-dicarboxylate + 3 O2 = pyrroloquinoline quinone + 2 H2O2 + 2 H2O + H(+). It functions in the pathway cofactor biosynthesis; pyrroloquinoline quinone biosynthesis. Ring cyclization and eight-electron oxidation of 3a-(2-amino-2-carboxyethyl)-4,5-dioxo-4,5,6,7,8,9-hexahydroquinoline-7,9-dicarboxylic-acid to PQQ. This chain is Pyrroloquinoline-quinone synthase, found in Bradyrhizobium sp. (strain ORS 278).